The primary structure comprises 231 residues: 5'-methylthioadenosine/S-adenosylhomocysteine nucleosidase (231 aa).

Glu-12 functions as the Proton acceptor in the catalytic mechanism. Substrate is bound by residues Gly-78, Ile-153, and 174–175; that span reads ME. Asp-198 serves as the catalytic Proton donor.

It belongs to the PNP/UDP phosphorylase family. MtnN subfamily.

It carries out the reaction S-adenosyl-L-homocysteine + H2O = S-(5-deoxy-D-ribos-5-yl)-L-homocysteine + adenine. The enzyme catalyses S-methyl-5'-thioadenosine + H2O = 5-(methylsulfanyl)-D-ribose + adenine. The catalysed reaction is 5'-deoxyadenosine + H2O = 5-deoxy-D-ribose + adenine. It participates in amino-acid biosynthesis; L-methionine biosynthesis via salvage pathway; S-methyl-5-thio-alpha-D-ribose 1-phosphate from S-methyl-5'-thioadenosine (hydrolase route): step 1/2. Its function is as follows. Catalyzes the irreversible cleavage of the glycosidic bond in both 5'-methylthioadenosine (MTA) and S-adenosylhomocysteine (SAH/AdoHcy) to adenine and the corresponding thioribose, 5'-methylthioribose and S-ribosylhomocysteine, respectively. Also cleaves 5'-deoxyadenosine, a toxic by-product of radical S-adenosylmethionine (SAM) enzymes, into 5-deoxyribose and adenine. In Shewanella putrefaciens (strain CN-32 / ATCC BAA-453), this protein is 5'-methylthioadenosine/S-adenosylhomocysteine nucleosidase.